A 537-amino-acid chain; its full sequence is Putative cysteine ligase BshC (537 aa).

The stretch at 422-450 forms a coiled coil; sequence IEKVEGMIEQQRRLNQDLLDEVAGNQNNI.

This sequence belongs to the BshC family.

Involved in bacillithiol (BSH) biosynthesis. May catalyze the last step of the pathway, the addition of cysteine to glucosamine malate (GlcN-Mal) to generate BSH. This Staphylococcus aureus (strain bovine RF122 / ET3-1) protein is Putative cysteine ligase BshC.